Here is a 395-residue protein sequence, read N- to C-terminus: Phosphopentomutase (395 aa).

Residues Asp-14, Asp-286, His-291, Asp-327, His-328, and His-339 each contribute to the Mn(2+) site.

It belongs to the phosphopentomutase family. It depends on Mn(2+) as a cofactor.

The protein localises to the cytoplasm. It catalyses the reaction 2-deoxy-alpha-D-ribose 1-phosphate = 2-deoxy-D-ribose 5-phosphate. The enzyme catalyses alpha-D-ribose 1-phosphate = D-ribose 5-phosphate. The protein operates within carbohydrate degradation; 2-deoxy-D-ribose 1-phosphate degradation; D-glyceraldehyde 3-phosphate and acetaldehyde from 2-deoxy-alpha-D-ribose 1-phosphate: step 1/2. Isomerase that catalyzes the conversion of deoxy-ribose 1-phosphate (dRib-1-P) and ribose 1-phosphate (Rib-1-P) to deoxy-ribose 5-phosphate (dRib-5-P) and ribose 5-phosphate (Rib-5-P), respectively. In Staphylococcus haemolyticus (strain JCSC1435), this protein is Phosphopentomutase.